Reading from the N-terminus, the 248-residue chain is 1-(5-phosphoribosyl)-5-[(5-phosphoribosylamino)methylideneamino] imidazole-4-carboxamide isomerase (248 aa).

Asp8 (proton acceptor) is an active-site residue. The active-site Proton donor is the Asp129.

Belongs to the HisA/HisF family.

The protein resides in the cytoplasm. The catalysed reaction is 1-(5-phospho-beta-D-ribosyl)-5-[(5-phospho-beta-D-ribosylamino)methylideneamino]imidazole-4-carboxamide = 5-[(5-phospho-1-deoxy-D-ribulos-1-ylimino)methylamino]-1-(5-phospho-beta-D-ribosyl)imidazole-4-carboxamide. The protein operates within amino-acid biosynthesis; L-histidine biosynthesis; L-histidine from 5-phospho-alpha-D-ribose 1-diphosphate: step 4/9. This Desulfitobacterium hafniense (strain Y51) protein is 1-(5-phosphoribosyl)-5-[(5-phosphoribosylamino)methylideneamino] imidazole-4-carboxamide isomerase.